Here is a 703-residue protein sequence, read N- to C-terminus: ABC transporter G family member 11 (703 aa).

One can recognise an ABC transporter domain in the interval 50–293; sequence LTWQDLTVMV…FAQAGFPCPA (244 aa). 87-94 is an ATP binding site; the sequence is GPSGSGKS. The ABC transmembrane type-2 domain maps to 382–594; that stretch reads LQTYTLTKRS…ALQGQYQNDL (213 aa). N394 carries an N-linked (GlcNAc...) asparagine glycan. Transmembrane regions (helical) follow at residues 406–426, 436–456, 485–505, 513–533, 540–560, and 628–648; these read LLIYILVTVCIGTIYLNVGTS, CASFVFGFVTFMSIGGFPSFV, TPFLIMITFISGTICYFMVGL, LFFVLCLYASVTVVESLMMAI, FLMGIIIGAGIQGIFMLVSGF, and INLSVILSMIIIYRIIFFIMI. Residues N671 and N675 are each glycosylated (N-linked (GlcNAc...) asparagine). Position 688 is a phosphoserine (S688).

Belongs to the ABC transporter superfamily. ABCG family. Eye pigment precursor importer (TC 3.A.1.204) subfamily. As to quaternary structure, homodimer. Forms heterodimers with ABCG9, ABCG12 and ABCG14 in epidermal cells. Expressed in seedlings, roots, stems, leaves, flowers, and siliques, mostly in epidermis, trichomes, vasculatures and developing tissues. Follows an uniparental maternal expression in the seed, thus being the product of a maternally expressed imprinted gene. Accumulates in the phloem. Transcripts seem to be transported from shoots to roots.

It localises to the cell membrane. In terms of biological role, required for the cuticle, root suberin and pollen coat development by controlling cutin and maybe wax transport to the extracellular matrix. Involved in developmental plasticity and stress responses. Together with ABCG9 and ABCG14, required for vascular development by regulating lipid/sterol homeostasis. May be a transporter of lignin precursors during tracheary element differentiation. The protein is ABC transporter G family member 11 of Arabidopsis thaliana (Mouse-ear cress).